Consider the following 146-residue polypeptide: Snaclec agkicetin-C subunit beta (146 aa).

Residues 1–23 (MGRFIFVSFGLLVVFLSLSGTGA) form the signal peptide. Intrachain disulfides connect Cys-25/Cys-36, Cys-53/Cys-142, and Cys-119/Cys-134. Residues 32–143 (YEGNCYLVVK…CSRTQPFVCK (112 aa)) enclose the C-type lectin domain.

This sequence belongs to the snaclec family. As to quaternary structure, heterodimer of subunits alpha and beta; disulfide-linked. As to expression, expressed by the venom gland.

The protein localises to the secreted. Functionally, is a potent glycoprotein Ibalpha (GP1BA) antagonist. Concentration-dependently inhibits botrocetin-, ristocetin- and low dose thrombin-induced platelet aggregation. Inhibits platelet adhesion only through inhibiting the vWF interaction with GP1BA, but has minimal effect on other platelet receptors, such as alpha-IIb/beta-3 (ITGA2B/ITGB3) or alpha-2/beta-1 (ITGA2/ITGB1). Causes an instant severe thrombocytopenia in rats and is not lethal to mice. The protein is Snaclec agkicetin-C subunit beta of Deinagkistrodon acutus (Hundred-pace snake).